A 601-amino-acid chain; its full sequence is Elongation factor 4 (601 aa).

Positions 7-189 (DNIRNFSIVA…AIVKRLPPPK (183 aa)) constitute a tr-type G domain. Residues 19 to 24 (DHGKST) and 136 to 139 (NKVD) contribute to the GTP site.

This sequence belongs to the TRAFAC class translation factor GTPase superfamily. Classic translation factor GTPase family. LepA subfamily.

Its subcellular location is the cell inner membrane. The enzyme catalyses GTP + H2O = GDP + phosphate + H(+). Functionally, required for accurate and efficient protein synthesis under certain stress conditions. May act as a fidelity factor of the translation reaction, by catalyzing a one-codon backward translocation of tRNAs on improperly translocated ribosomes. Back-translocation proceeds from a post-translocation (POST) complex to a pre-translocation (PRE) complex, thus giving elongation factor G a second chance to translocate the tRNAs correctly. Binds to ribosomes in a GTP-dependent manner. This chain is Elongation factor 4, found in Methylorubrum populi (strain ATCC BAA-705 / NCIMB 13946 / BJ001) (Methylobacterium populi).